The following is a 314-amino-acid chain: A-kinase anchor protein 7 isoform gamma (314 aa).

The segment at 1-46 (MPFAAVDIQDDCGSPDVPQANPKRSKEEEEDRGDKNDHVKKRKKAK) is disordered. Basic and acidic residues predominate over residues 24–37 (RSKEEEEDRGDKND). AMP contacts are provided by residues threonine 95 and 185–187 (HLT). CMP contacts are provided by residues threonine 95 and 185–187 (HLT). The PKA-RII-alpha subunit binding domain stretch occupies residues 260 to 314 (AELVRLSKRLVENAVLKAVQQYLEETQNKKQPGEGNSTKAEEGDRNGDGSDNNRK). The interval 261-285 (ELVRLSKRLVENAVLKAVQQYLEET) is RI-alpha-binding. An RII-binding region spans residues 262–275 (LVRLSKRLVENAVL). Residues 281-314 (YLEETQNKKQPGEGNSTKAEEGDRNGDGSDNNRK) form a disordered region. Residues 298-314 (KAEEGDRNGDGSDNNRK) show a composition bias toward basic and acidic residues.

Binds cAMP-dependent protein kinase (PKA). Interacts with PRKCA; only the cytoplasmic form is capable of interacting with PRKCA. As to expression, expressed in oocytes.

It is found in the nucleus. The protein localises to the cytoplasm. Functionally, probably targets cAMP-dependent protein kinase (PKA) to the cellular membrane or cytoskeletal structures. The membrane-associated form reduces epithelial sodium channel (ENaC) activity, whereas the free cytoplasmic form may negatively regulate ENaC channel feedback inhibition by intracellular sodium. The polypeptide is A-kinase anchor protein 7 isoform gamma (Mus musculus (Mouse)).